The following is a 398-amino-acid chain: Tyrosine--tRNA ligase (398 aa).

Residues 42–51 (PTAPDIHLGH) carry the 'HIGH' region motif. A 'KMSKS' region motif is present at residues 226 to 230 (KMSKS). Lys229 serves as a coordination point for ATP. The region spanning 336–397 (LAIANLLKDA…GKRKFAKVTL (62 aa)) is the S4 RNA-binding domain.

This sequence belongs to the class-I aminoacyl-tRNA synthetase family. TyrS type 2 subfamily. Homodimer.

It is found in the cytoplasm. The catalysed reaction is tRNA(Tyr) + L-tyrosine + ATP = L-tyrosyl-tRNA(Tyr) + AMP + diphosphate + H(+). Its function is as follows. Catalyzes the attachment of tyrosine to tRNA(Tyr) in a two-step reaction: tyrosine is first activated by ATP to form Tyr-AMP and then transferred to the acceptor end of tRNA(Tyr). In Shewanella oneidensis (strain ATCC 700550 / JCM 31522 / CIP 106686 / LMG 19005 / NCIMB 14063 / MR-1), this protein is Tyrosine--tRNA ligase.